We begin with the raw amino-acid sequence, 146 residues long: Hemoglobin subunit beta (146 aa).

Valine 1 bears the N-acetylvaline mark. The region spanning 2 to 146 is the Globin domain; it reads HLTPEEKNAV…VANALAHKYH (145 aa). Position 12 is a phosphothreonine (threonine 12). A Phosphoserine modification is found at serine 44. Lysine 59 carries the post-translational modification N6-acetyllysine. Histidine 63 serves as a coordination point for heme b. Residue lysine 82 is modified to N6-acetyllysine. Residue histidine 92 participates in heme b binding. Cysteine 93 is modified (S-nitrosocysteine). Residue lysine 144 is modified to N6-acetyllysine.

This sequence belongs to the globin family. In terms of assembly, heterotetramer of two alpha chains and two beta chains. As to expression, red blood cells.

Its function is as follows. Involved in oxygen transport from the lung to the various peripheral tissues. The sequence is that of Hemoglobin subunit beta (HBB) from Theropithecus gelada (Gelada baboon).